A 493-amino-acid chain; its full sequence is 6-aminohexanoate-cyclic-dimer hydrolase (493 aa).

Residues Lys72 and Ser150 each act as charge relay system in the active site. Catalysis depends on Ser174, which acts as the Acyl-ester intermediate.

This sequence belongs to the amidase family. In terms of assembly, homodimer.

The catalysed reaction is 1,8-diazacyclotetradecane-2,9-dione + H2O = N-(6-aminohexanoyl)-6-aminohexanoate. The protein operates within xenobiotic degradation; nylon-6 oligomer degradation. Its activity is regulated as follows. Strongly inhibited by 1 uM diisopropylphosphofluoridate and 10 uM p-chloromercuribenzoate but scarcely inhibited by 100 mM EDTA in vitro. Its function is as follows. Specifically catalyzes the hydrolysis of 6-aminohexanoic acid cyclic dimer (1,8-diazacyclotetradecane-2,9-dione) to form the linear dimer 6-aminohexanoyl-6-aminohexanoic acid. Is inactive on 6-aminohexanoic acid oligomers (degree of polymerization 2 to 6), various other cyclic amides, cyclic diamides, linear amides, oligopeptides, and casein. Allows the bacterium to grow on a medium containing 6-aminohexanoic acid cyclic dimer as the sole carbon and nitrogen sources. This Paenarthrobacter ureafaciens protein is 6-aminohexanoate-cyclic-dimer hydrolase (nylA).